Reading from the N-terminus, the 114-residue chain is Apokedarcidin (114 aa).

2 disulfides stabilise this stretch: cysteine 37/cysteine 47 and cysteine 88/cysteine 95.

It belongs to the neocarzinostatin family.

Its function is as follows. Binds non-covalently to an enediyne chromophore which is the cytotoxic and mutagenic component of the antibiotic. The chromophore cleaves duplex DNA site-specifically in a single-stranded manner. The apoprotein cleaves proteins selectively, in particular highly basic histones, with H1 proteins being cleaved the more readily. The chain is Apokedarcidin from Actinomycete sp. (strain L585-6 / ATCC 53650).